A 582-amino-acid polypeptide reads, in one-letter code: Leucine-rich repeat transmembrane neuronal protein 3 (582 aa).

An N-terminal signal peptide occupies residues 1 to 30 (MGFNVIRLLRGSAVAVVLAPTVLLTMLSSA). Positions 31 to 61 (ERGCPKGCRCEGKMVYCESQKLQEIPSSISA) constitute an LRRNT domain. Residues 31–420 (ERGCPKGCRC…VDTEHISFHK (390 aa)) are Extracellular-facing. 10 LRR repeats span residues 63–83 (CLGL…QFKG), 86–107 (QLTW…AFNG), 110–131 (RLKE…TFRP), 134–155 (NLRN…QFRG), 158–179 (KLLS…IFQD), 182–203 (NLEL…VFAG), 206–226 (RLKE…ALFP), 230–251 (SLQN…MSWT), 254–275 (SLQR…SVFQ), and 279–300 (NLQR…ILDS). N-linked (GlcNAc...) asparagine glycosylation is present at N126. The region spanning 312–363 (NIWECSRNICSLVNWLRSFKGLRENTIICASPKELQGVNVIDAVKNYSICGK) is the LRRCT domain. N357 carries an N-linked (GlcNAc...) asparagine glycan. Residues 378–410 (KPTFKPKLPRPKHESKPPLPPTVGATEPSPETD) form a disordered region. Residues 421 to 441 (IIAGSVALFLSVLVILLVMYV) form a helical membrane-spanning segment. Residues 442 to 582 (SWKRYPASMK…RISDHKPQLA (141 aa)) lie on the Cytoplasmic side of the membrane.

It belongs to the LRRTM family. Expressed in neuronal tissues.

It localises to the cell membrane. Its subcellular location is the postsynaptic cell membrane. Functionally, may play a role in the development and maintenance of the vertebrate nervous system. Exhibits a limited synaptogenic activity in vitro, restricted to excitatory presynaptic differentiation. This Mus musculus (Mouse) protein is Leucine-rich repeat transmembrane neuronal protein 3 (Lrrtm3).